Consider the following 464-residue polypeptide: IAA-amino acid hydrolase ILR1-like 6 (464 aa).

Positions 1 to 24 (MDNLRKLNLLSVSLTIIFVSLTIA) are cleaved as a signal peptide. Mn(2+)-binding residues include Cys-175, His-177, Glu-211, His-235, and His-433.

It belongs to the peptidase M20 family.

The enzyme catalyses a jasmonyl-L-amino acid + H2O = a jasmonate + an L-alpha-amino acid. Hydrolyzes certain amino acid conjugates of the plant growth regulator indole-3-acetic acid (IAA). Also hydrolyzes amino acid conjugates of jasmonic acid and 12-hydroxy jasmonic acid. The sequence is that of IAA-amino acid hydrolase ILR1-like 6 from Arabidopsis thaliana (Mouse-ear cress).